Reading from the N-terminus, the 156-residue chain is Protein OXIDATIVE STRESS 3 LIKE 3 (156 aa).

Positions 1-67 (MHYQEQMESL…GLSKHYKGKS (67 aa)) are disordered. Positions 13-26 (GEERRRGNYTRDVD) are enriched in basic and acidic residues.

The protein resides in the nucleus. Its function is as follows. Promotes slightly the tolerance to oxidizing chemicals (e.g. diamide). The sequence is that of Protein OXIDATIVE STRESS 3 LIKE 3 from Arabidopsis thaliana (Mouse-ear cress).